The chain runs to 489 residues: Cysteine--tRNA ligase (489 aa).

C29 is a binding site for Zn(2+). The short motif at 31–41 is the 'HIGH' region element; the sequence is ITSYDYCHIGH. Residues C209, H234, and E238 each contribute to the Zn(2+) site. Positions 266 to 270 match the 'KMSKS' region motif; that stretch reads KMSKS. Residue K269 coordinates ATP.

Belongs to the class-I aminoacyl-tRNA synthetase family. In terms of assembly, monomer. Requires Zn(2+) as cofactor.

The protein localises to the cytoplasm. The catalysed reaction is tRNA(Cys) + L-cysteine + ATP = L-cysteinyl-tRNA(Cys) + AMP + diphosphate. This Desulfotalea psychrophila (strain LSv54 / DSM 12343) protein is Cysteine--tRNA ligase.